Here is a 579-residue protein sequence, read N- to C-terminus: Acetolactate synthase (579 aa).

Glu-61 lines the thiamine diphosphate pocket. FAD is bound by residues Arg-163, 274-295 (HGTA…VGVR), and 317-336 (DIDP…IVGD). The segment at 408–487 (QHQMWAGQFV…VKVIILNNGW (80 aa)) is thiamine pyrophosphate binding. The Mg(2+) site is built by Asp-458 and Asn-485.

The protein belongs to the TPP enzyme family. The cofactor is Mg(2+). It depends on thiamine diphosphate as a cofactor.

The enzyme catalyses 2 pyruvate + H(+) = (2S)-2-acetolactate + CO2. It participates in amino-acid biosynthesis; L-isoleucine biosynthesis; L-isoleucine from 2-oxobutanoate: step 1/4. Its pathway is amino-acid biosynthesis; L-valine biosynthesis; L-valine from pyruvate: step 1/4. In Arthrospira platensis (Spirulina platensis), this protein is Acetolactate synthase (ilvY).